We begin with the raw amino-acid sequence, 152 residues long: Ribosome maturation factor RimP (152 aa).

The protein belongs to the RimP family.

The protein localises to the cytoplasm. In terms of biological role, required for maturation of 30S ribosomal subunits. This is Ribosome maturation factor RimP from Alkaliphilus metalliredigens (strain QYMF).